A 2890-amino-acid chain; its full sequence is MSKKIPLKNRLRADFTKTPTDLEVPNLLSLQRDSYDSFLYSKDGKESGIEKVFKSIFPIQDEHNRITLEYAGCEFGKSKYTVREAMERGITYSIPLKIKVRLILWEKDTKSGEKNGIKDIKEQSIFIREIPLMTERTSFIINGVERVVVNQLHRSPGVIFKEEESSTSLNKLIYTGQIIPDRGSWLYFEYDSKDVLYARINKRRKVPVTILFRAMDYQKQDIIKMFYPLVKVRYENDKYLIPFASLDANQRMEFDLKDSQGKIILLAGKKLTSKKIKELKENHLEWVEYPMDILINRHLAEPVMVGKEVLLDMLTQLDKNKLEKIHDLGVQEFVIINDLALGHDASIIHSFLADYESLRLLKQTEKIDDENALAAIRIHKVMKPGDPVTTEVAKQFVKKLFFDPERYDLTMVGRMKMNHKLGLHVPDYITTLTHEDIITTVKYLMKIKNNQGKIDDRDHLGNRRIRAVGELLANELHSGLVKMQKTIKDKLTTMSGAFDSLMPHDLVNSKMITSTIMEFFMGGQLSQFMDQTNPLSEVTHKRRLSALGEGGLVKDRVGFEARDVHPTHYGRICPIETPEGQNIGLINTLSTFTRVNDLGFIEAPYKKVVDGKVVGETIYLTAIQEDSHIIAPASTPIDEEGNILGDLIETRVEGEIVLNEKSKVTLMDLSSSMLVGVAASLIPFLEHDDANRALMGTNMQRQAVPLLRSDAPIVGTGIEKIIARDSWGAIKANRAGAVEKIDSKNIYILGEGKEEAYIDAYSLQKNLRTNQNTSFNQVPIVKVGDKVEAGQIIADGPSMDRGELALGKNVRVAFMPWNGYNFEDAIVVSERITKDDIFTSTHIYEKEVDARELKHGVEEFTADIPDVKEEALAHLDESGIVKVGTYVSAGMILVGKTSPKGEIKSTPEERLLRAIFGDKAGHVVNKSLYCPPSLEGTVIDVKVFTKKGYEKDARVLSAYEEEKAKLDMEHFDRLTMLNREELLRVSSLLSQAILEEPFSHNGKDYKEGDQIPKEEIASINRFTLASLVKKYSKEVQNHYEITKNNFLEQKKVLGEEHEEKLSILEKDDILPNGVIKKVKLYIATKRKLKVGDKMAGRHGNKGIVSNIVPVADMPYTADGEPVDIVLNPLGVPSRMNIGQILEMHLGLVGKEFGKQIARMLEDKTKDFAKELRVKMLEIANAINEKDPLTIHALENCSDEELLEYAKDWSKGVKMAIPVFEGISQEKFYKLFELAKIAMDGKMDLYDGRTGEKMRERVNVGYMYMIKLHHLVDEKVHARSTGPYSLVTHQPVGGKALFGGQRFGEMEVWALEAYGAAHTLKEMLTIKSDDIRGRENAYRAIVKGEQVGESEIPETFYVLTKELQSLALDINIFGDDVDEDGAPKPIVIKEDDRPKDFSSFQLTLASPEKIHSWSYGEVKKPETINYRTLKPERDGLFCMKIFGPTKDYECLCGKYKKPRFKDIGTCEKCGVAITHSKVRRFRMGHIELATPVAHIWYVNSLPSRISTLLGVKMKDLERVLYYEAYIVKEPGEAAYDNEGTKLVMKYDILNEEQYQNISRRYEDRGFIAQMGGEAIKDLLEEIDLITLLQSLKEEVKDTNSDAKKKKLIKRLKVVESFLNSGNRPEWMMLTVLPVLPPDLRPLVALDGGKFAVSDVNELYRRVINRNQRLKRLMELGAPEIIVRNEKRMLQEAVDVLFDNGRSTNAVKGANKRPLKSLSEIIKGKQGRFRQNLLGKRVDFSGRSVIVVGPNLKMDECGLPKNMALELFKPHLLSKLEERGYATTLKQAKRMIEQKSNEVWECLQEITEGYPVLLNRAPTLHKQSIQAFHPKLIDGKAIQLHPLVCSAFNADFDGDQMAVHVPLSQEAIAECKVLMLSSMNILLPASGKAVAIPSQDMVLGLYYLSLEKSGVKGEHKLFSSVNEIITAIDTKELDIHAKIRVLDQGNIIATSAGRMIIKSILPDFIPTDLWNRPMKKKDIGVLVDYVHKVGGIGITATFLDNLKTLGFRYATKAGISISMEDIITPKDKQKMVEKAKVEVKKIQQQYDQGLLTDQERYNKIIDTWTEVNDKMSKEMMIAIAKDKEGFNSIYMMADSGARGSAAQIRQLSAMRGLMTKPDGSIIETPIISNFKEGLNVLEYFNSTHGARKGLADTALKTANAGYLTRKLIDVSQNVKVVSDDCGTHEGIEITDIAVGSELIEPLEERIFGRVLLEDVIDPITNEILLYADTLIDEEGAKKVVEAGIKSITIRTPVTCKAPKGVCAKCYGLNLGEGKMSYPGEAVGVVAAQSIGEPGTQLTLRTFHVGGTASRSQDEREIVASKEGFVRFYNLRTYTNKEGKNIIANRRNASILVVEPKIKAPFDGELRIETVYEEVVVSVKNGEQEAKFVLRRSDIVKPSELAGVGGKIEGKVYLPYASGHKVHKGGSIADIIQEGWNVPNRIPYASELLVKDNDPIAQDVYAKEKGTIKYYVLEANHLERTHGIKKGDMVSEKGLFAVVADDNGREAARHYIARGSEILIDDNSEVSANSVISKLTTNTFKTIATWDPYNTPIIADFKGKVSFVDVIAGVTVAEKEDENTGITSLVVNDYIPSGYKPSLFLEGANGEEMRYFLEPKTSIAISDGSSVEQAEVLAKIPKATVKSRDITGGLPRVSELFEARKPKPKDVAILSEVDGIVSFGKPIRNKEHIIVTSKDGRSMDYFVDKGKQILVHADEFVHAGEAMTDGVISSHDILRISGEKELYKYIVSEVQQVYRRQGVSIADKHIEIIVSQMLRQVRILDSGDSKFIEGDLVSKKLFKEENARMIALKGEPAIAEPVLLGITRAAIGSDSIISAASFQETTKVLTEASIAMKKDFLEDLKENVVLGRMIPVGTGMYKNKKIVLRTLEDGPKF.

The DNA-directed RNA polymerase subunit beta stretch occupies residues 1–1377 (MSKKIPLKNR…DINIFGDDVD (1377 aa)). Positions 1384–2890 (PIVIKEDDRP…LRTLEDGPKF (1507 aa)) are DNA-directed RNA polymerase subunit beta'. 4 residues coordinate Zn(2+): Cys1449, Cys1451, Cys1465, and Cys1468. Residues Asp1849, Asp1851, and Asp1853 each coordinate Mg(2+). Zn(2+) contacts are provided by Cys2179, Cys2253, Cys2260, and Cys2263.

It in the N-terminal section; belongs to the RNA polymerase beta chain family. The protein in the C-terminal section; belongs to the RNA polymerase beta' chain family. In terms of assembly, the RNAP catalytic core consists of 2 alpha, 1 beta/beta' and 1 omega subunit. When a sigma factor is associated with the core the holoenzyme is formed, which can initiate transcription. It depends on Mg(2+) as a cofactor. Zn(2+) serves as cofactor.

It catalyses the reaction RNA(n) + a ribonucleoside 5'-triphosphate = RNA(n+1) + diphosphate. Functionally, DNA-dependent RNA polymerase catalyzes the transcription of DNA into RNA using the four ribonucleoside triphosphates as substrates. This Helicobacter pylori (strain HPAG1) protein is Bifunctional DNA-directed RNA polymerase subunit beta-beta' (rpoBC).